The primary structure comprises 170 residues: 3-hydroxyanthranilate 3,4-dioxygenase (170 aa).

Arg-44 serves as a coordination point for O2. Fe cation is bound by residues His-48, Glu-54, and His-92. Glu-54 is a substrate binding site. Substrate-binding residues include Arg-96 and Glu-106. 4 residues coordinate a divalent metal cation: Cys-121, Cys-124, Cys-158, and Cys-161.

This sequence belongs to the 3-HAO family. It depends on Fe(2+) as a cofactor.

It is found in the cytoplasm. The enzyme catalyses 3-hydroxyanthranilate + O2 = (2Z,4Z)-2-amino-3-carboxymuconate 6-semialdehyde. The protein operates within cofactor biosynthesis; NAD(+) biosynthesis; quinolinate from L-kynurenine: step 3/3. Functionally, catalyzes the oxidative ring opening of 3-hydroxyanthranilate to 2-amino-3-carboxymuconate semialdehyde, which spontaneously cyclizes to quinolinate. The chain is 3-hydroxyanthranilate 3,4-dioxygenase from Scheffersomyces stipitis (strain ATCC 58785 / CBS 6054 / NBRC 10063 / NRRL Y-11545) (Yeast).